The following is a 159-amino-acid chain: Ribosomal RNA large subunit methyltransferase H (159 aa).

Gly108 provides a ligand contact to S-adenosyl-L-methionine.

Belongs to the RNA methyltransferase RlmH family. In terms of assembly, homodimer.

Its subcellular location is the cytoplasm. It carries out the reaction pseudouridine(1915) in 23S rRNA + S-adenosyl-L-methionine = N(3)-methylpseudouridine(1915) in 23S rRNA + S-adenosyl-L-homocysteine + H(+). Specifically methylates the pseudouridine at position 1915 (m3Psi1915) in 23S rRNA. The chain is Ribosomal RNA large subunit methyltransferase H from Lactobacillus gasseri (strain ATCC 33323 / DSM 20243 / BCRC 14619 / CIP 102991 / JCM 1131 / KCTC 3163 / NCIMB 11718 / NCTC 13722 / AM63).